The primary structure comprises 938 residues: Isoleucine--tRNA ligase (938 aa).

A 'HIGH' region motif is present at residues 58–68 (PYANGSIHIGH). Lys183 is subject to N6-acetyllysine. Glu561 provides a ligand contact to L-isoleucyl-5'-AMP. The short motif at 602 to 606 (KMSKS) is the 'KMSKS' region element. ATP is bound at residue Lys605. The Zn(2+) site is built by Cys901, Cys904, Cys921, and Cys924.

Belongs to the class-I aminoacyl-tRNA synthetase family. IleS type 1 subfamily. In terms of assembly, monomer. Requires Zn(2+) as cofactor.

The protein resides in the cytoplasm. It carries out the reaction tRNA(Ile) + L-isoleucine + ATP = L-isoleucyl-tRNA(Ile) + AMP + diphosphate. Functionally, catalyzes the attachment of isoleucine to tRNA(Ile). As IleRS can inadvertently accommodate and process structurally similar amino acids such as valine, to avoid such errors it has two additional distinct tRNA(Ile)-dependent editing activities. One activity is designated as 'pretransfer' editing and involves the hydrolysis of activated Val-AMP. The other activity is designated 'posttransfer' editing and involves deacylation of mischarged Val-tRNA(Ile). This Escherichia coli O9:H4 (strain HS) protein is Isoleucine--tRNA ligase.